The following is a 431-amino-acid chain: MVSLEKNDHLMLARQLPLKSVALILAGGRGTRLKDLTNKRAKPAVHFGGKFRIIDFALSNCINSGIRRMGVITQYQSHTLVQHIQRGWSFFNEEMNEFVDLLPAQQRMKGENWYRGTADAVTQNLDIIRRYKAEYVVILAGDHIYKQDYSHMLIDHVEKGARCTVACMPVPIEEASAFGVMAVDENDKIIEFVEKPANPPSMPNDPSKSLASMGIYVFDADYLYELLEEDDRDENSSHDFGKDLIPKITEAGLAYAHPFPLSCVQSDPDAEPYWRDVGTLEAYWKANLDLASVVPELDMYDRNWPIRTYNESLPPAKFVQDRSGSHGMTLNSLVSGGCVISGSVVVQSVLFSRVRVNSFCNIDSAVLLPEVWVGRSCRLRRCVIDRACVIPEGMVIGENAEEDARRFYRSEEGIVLVTREMLRKLGHKQER.

Residue K39 participates in beta-D-fructose 1,6-bisphosphate binding. Residues R40, H46, and R52 each contribute to the AMP site. Y114 provides a ligand contact to alpha-D-glucose 1-phosphate. R130 is an AMP binding site. Alpha-D-glucose 1-phosphate is bound by residues G179, 194–195 (EK), and S212. E370 and R386 together coordinate AMP. Beta-D-fructose 1,6-bisphosphate contacts are provided by residues 419–423 (REMLR) and 429–431 (QER).

Belongs to the bacterial/plant glucose-1-phosphate adenylyltransferase family. Homotetramer.

The enzyme catalyses alpha-D-glucose 1-phosphate + ATP + H(+) = ADP-alpha-D-glucose + diphosphate. It participates in glycan biosynthesis; glycogen biosynthesis. With respect to regulation, allosterically activated by fructose-1,6-bisphosphate (F16BP) and inhibited by AMP. In terms of biological role, involved in the biosynthesis of ADP-glucose, a building block required for the elongation reactions to produce glycogen. Catalyzes the reaction between ATP and alpha-D-glucose 1-phosphate (G1P) to produce pyrophosphate and ADP-Glc. The protein is Glucose-1-phosphate adenylyltransferase of Escherichia coli O127:H6 (strain E2348/69 / EPEC).